The chain runs to 340 residues: MIKVGIIGSTGYTGLELIRLLHNHPNAKIIALCSRINASKSVIKEFPSLISYIDLDFVTPNEKKLFECDIIFFATPHGVAMNSVSKFLNKDIKIIDLGADFRIKDSTEWSKWYGMTHTQGDLLKDAVYGLPEVYNSQIKNATLIANPGCYPTAIILALKPLLETNIIDTKSIIADCKSGVSGAGRSANIATLFCEVNESLKPYNVDQHRHKPETQQVLTDIAGKEVNFFFTPHLVPMTRGMLASIYVDLIKDINVQKLFEKHYQNNKFIHILPTNVYPQTKSVKGTNNCHIGIQKSNNKLIIMSVIDNIIKGASGQAIQNMNLMFGLDEGLGLEQIGLLP.

The active site involves cysteine 149.

Belongs to the NAGSA dehydrogenase family. Type 1 subfamily.

The protein resides in the cytoplasm. It carries out the reaction N-acetyl-L-glutamate 5-semialdehyde + phosphate + NADP(+) = N-acetyl-L-glutamyl 5-phosphate + NADPH + H(+). It participates in amino-acid biosynthesis; L-arginine biosynthesis; N(2)-acetyl-L-ornithine from L-glutamate: step 3/4. Catalyzes the NADPH-dependent reduction of N-acetyl-5-glutamyl phosphate to yield N-acetyl-L-glutamate 5-semialdehyde. The protein is N-acetyl-gamma-glutamyl-phosphate reductase of Vesicomyosocius okutanii subsp. Calyptogena okutanii (strain HA).